The chain runs to 419 residues: UDP-N-acetylmuramoylalanine--D-glutamate ligase (419 aa).

109–115 (GSAGKTT) is a binding site for ATP.

This sequence belongs to the MurCDEF family.

It localises to the cytoplasm. The catalysed reaction is UDP-N-acetyl-alpha-D-muramoyl-L-alanine + D-glutamate + ATP = UDP-N-acetyl-alpha-D-muramoyl-L-alanyl-D-glutamate + ADP + phosphate + H(+). Its pathway is cell wall biogenesis; peptidoglycan biosynthesis. Cell wall formation. Catalyzes the addition of glutamate to the nucleotide precursor UDP-N-acetylmuramoyl-L-alanine (UMA). The protein is UDP-N-acetylmuramoylalanine--D-glutamate ligase of Chlamydia caviae (strain ATCC VR-813 / DSM 19441 / 03DC25 / GPIC) (Chlamydophila caviae).